The primary structure comprises 251 residues: Imidazole glycerol phosphate synthase subunit HisF (251 aa).

Catalysis depends on residues Asp-11 and Asp-130.

The protein belongs to the HisA/HisF family. Heterodimer of HisH and HisF.

It localises to the cytoplasm. It catalyses the reaction 5-[(5-phospho-1-deoxy-D-ribulos-1-ylimino)methylamino]-1-(5-phospho-beta-D-ribosyl)imidazole-4-carboxamide + L-glutamine = D-erythro-1-(imidazol-4-yl)glycerol 3-phosphate + 5-amino-1-(5-phospho-beta-D-ribosyl)imidazole-4-carboxamide + L-glutamate + H(+). It functions in the pathway amino-acid biosynthesis; L-histidine biosynthesis; L-histidine from 5-phospho-alpha-D-ribose 1-diphosphate: step 5/9. In terms of biological role, IGPS catalyzes the conversion of PRFAR and glutamine to IGP, AICAR and glutamate. The HisF subunit catalyzes the cyclization activity that produces IGP and AICAR from PRFAR using the ammonia provided by the HisH subunit. The sequence is that of Imidazole glycerol phosphate synthase subunit HisF from Streptococcus mutans serotype c (strain ATCC 700610 / UA159).